The following is a 278-amino-acid chain: HTH-type transcriptional regulator HdfR (278 aa).

An HTH lysR-type domain is found at 1–58 (MDTELLKTFLEVSRTRHFGRAAEALYLTQSAVSFRIRQLENQLGVNLFTRHRNNIRLT). The H-T-H motif DNA-binding region spans 18 to 37 (FGRAAEALYLTQSAVSFRIR).

Belongs to the LysR transcriptional regulatory family.

Its function is as follows. Negatively regulates the transcription of the flagellar master operon flhDC by binding to the upstream region of the operon. The protein is HTH-type transcriptional regulator HdfR of Salmonella dublin (strain CT_02021853).